A 188-amino-acid polypeptide reads, in one-letter code: Molybdopterin synthase catalytic subunit (188 aa).

Positions 1–14 (MATQPPQDQTSTTP) are enriched in low complexity. The segment at 1–23 (MATQPPQDQTSTTPSLPPHLDPT) is disordered. Residues 134-135 (HR), lysine 150, and 157-159 (KRE) each bind substrate.

This sequence belongs to the MoaE family. MOCS2B subfamily. In terms of assembly, heterotetramer; composed of 2 small (MOCS2A) and 2 large (MOCS2B) subunits.

It is found in the cytoplasm. It carries out the reaction 2 [molybdopterin-synthase sulfur-carrier protein]-C-terminal-Gly-aminoethanethioate + cyclic pyranopterin phosphate + H2O = molybdopterin + 2 [molybdopterin-synthase sulfur-carrier protein]-C-terminal Gly-Gly + 2 H(+). Its pathway is cofactor biosynthesis; molybdopterin biosynthesis. In terms of biological role, catalytic subunit of the molybdopterin synthase complex, a complex that catalyzes the conversion of precursor Z into molybdopterin. Acts by mediating the incorporation of 2 sulfur atoms from thiocarboxylated MOCS2A into precursor Z to generate a dithiolene group. The polypeptide is Molybdopterin synthase catalytic subunit (Aspergillus fumigatus (strain ATCC MYA-4609 / CBS 101355 / FGSC A1100 / Af293) (Neosartorya fumigata)).